Reading from the N-terminus, the 205-residue chain is Methylthioribulose-1-phosphate dehydratase (205 aa).

Residues histidine 96 and histidine 98 each contribute to the Zn(2+) site.

This sequence belongs to the aldolase class II family. MtnB subfamily. Zn(2+) is required as a cofactor.

It catalyses the reaction 5-(methylsulfanyl)-D-ribulose 1-phosphate = 5-methylsulfanyl-2,3-dioxopentyl phosphate + H2O. It functions in the pathway amino-acid biosynthesis; L-methionine biosynthesis via salvage pathway; L-methionine from S-methyl-5-thio-alpha-D-ribose 1-phosphate: step 2/6. Catalyzes the dehydration of methylthioribulose-1-phosphate (MTRu-1-P) into 2,3-diketo-5-methylthiopentyl-1-phosphate (DK-MTP-1-P). The polypeptide is Methylthioribulose-1-phosphate dehydratase (Pseudomonas aeruginosa (strain LESB58)).